The primary structure comprises 481 residues: UDP-glycosyltransferase 73B3 (481 aa).

The active-site Proton acceptor is the His21. His21 provides a ligand contact to an anthocyanidin. The active-site Charge relay is Asp132. Positions 355, 357, 372, 375, 376, 377, and 380 each coordinate UDP-alpha-D-glucose. Residue Ala395 participates in an anthocyanidin binding. Residues Glu396 and Gln397 each contribute to the UDP-alpha-D-glucose site.

Belongs to the UDP-glycosyltransferase family. In terms of tissue distribution, expressed in roots and flowers.

It carries out the reaction a flavonol + UDP-alpha-D-glucose = a flavonol 3-O-beta-D-glucoside + UDP + H(+). Possesses quercetin 3-O-glucosyltransferase activity in vitro. Also active in vitro on benzoates and benzoate derivatives. Involved in stress or defense responses. The chain is UDP-glycosyltransferase 73B3 (UGT73B3) from Arabidopsis thaliana (Mouse-ear cress).